Here is a 136-residue protein sequence, read N- to C-terminus: uncharacterized protein (136 aa).

Helical transmembrane passes span 36-56 (FLLT…IYLI) and 63-83 (FAFA…LFLS).

It localises to the cell membrane. This is an uncharacterized protein from Mycoplasma pneumoniae (strain ATCC 29342 / M129 / Subtype 1) (Mycoplasmoides pneumoniae).